We begin with the raw amino-acid sequence, 505 residues long: Glycerol kinase (505 aa).

T14 is a binding site for ADP. ATP-binding residues include T14, T15, and S16. Residue T14 participates in sn-glycerol 3-phosphate binding. R18 serves as a coordination point for ADP. The sn-glycerol 3-phosphate site is built by R84, E85, Y136, and D246. 5 residues coordinate glycerol: R84, E85, Y136, D246, and Q247. The ADP site is built by T268 and G311. T268, G311, Q315, and G412 together coordinate ATP. Residues G412 and N416 each contribute to the ADP site.

It belongs to the FGGY kinase family.

It carries out the reaction glycerol + ATP = sn-glycerol 3-phosphate + ADP + H(+). The protein operates within polyol metabolism; glycerol degradation via glycerol kinase pathway; sn-glycerol 3-phosphate from glycerol: step 1/1. Its activity is regulated as follows. Inhibited by fructose 1,6-bisphosphate (FBP). Functionally, key enzyme in the regulation of glycerol uptake and metabolism. Catalyzes the phosphorylation of glycerol to yield sn-glycerol 3-phosphate. This Vibrio vulnificus (strain CMCP6) protein is Glycerol kinase.